Here is a 484-residue protein sequence, read N- to C-terminus: ATP synthase subunit beta (484 aa).

152–159 is a binding site for ATP; that stretch reads GGAGVGKT.

Belongs to the ATPase alpha/beta chains family. In terms of assembly, F-type ATPases have 2 components, CF(1) - the catalytic core - and CF(0) - the membrane proton channel. CF(1) has five subunits: alpha(3), beta(3), gamma(1), delta(1), epsilon(1). CF(0) has three main subunits: a(1), b(2) and c(9-12). The alpha and beta chains form an alternating ring which encloses part of the gamma chain. CF(1) is attached to CF(0) by a central stalk formed by the gamma and epsilon chains, while a peripheral stalk is formed by the delta and b chains.

It is found in the cell inner membrane. It catalyses the reaction ATP + H2O + 4 H(+)(in) = ADP + phosphate + 5 H(+)(out). Its function is as follows. Produces ATP from ADP in the presence of a proton gradient across the membrane. The catalytic sites are hosted primarily by the beta subunits. In Campylobacter lari (strain RM2100 / D67 / ATCC BAA-1060), this protein is ATP synthase subunit beta.